Here is a 270-residue protein sequence, read N- to C-terminus: Energy-coupling factor transporter ATP-binding protein EcfA (270 aa).

The ABC transporter domain maps to 5-238 (VEIENLTFFY…QLLEQNGLKA (234 aa)). 38–45 (GHNGAGKS) is a binding site for ATP.

It belongs to the ABC transporter superfamily. Energy-coupling factor EcfA family. In terms of assembly, forms a stable energy-coupling factor (ECF) transporter complex composed of 2 membrane-embedded substrate-binding proteins (S component), 2 ATP-binding proteins (A component) and 2 transmembrane proteins (T component).

It is found in the cell membrane. Its function is as follows. ATP-binding (A) component of a common energy-coupling factor (ECF) ABC-transporter complex. Unlike classic ABC transporters this ECF transporter provides the energy necessary to transport a number of different substrates. This is Energy-coupling factor transporter ATP-binding protein EcfA from Carboxydothermus hydrogenoformans (strain ATCC BAA-161 / DSM 6008 / Z-2901).